The following is a 470-amino-acid chain: 5-hydroxytryptamine receptor 2A (470 aa).

Positions 1 to 23 are disordered; that stretch reads MDVLFEDNAPLSPTTSSLMPSNG. Residues 1 to 80 are Extracellular-facing; that stretch reads MDVLFEDNAP…LQEKNWSALL (80 aa). A compositionally biased stretch (low complexity) spans 10-21; the sequence is PLSPTTSSLMPS. N-linked (GlcNAc...) asparagine glycosylation is found at Asn38, Asn44, Asn51, and Asn54. Residues 81-97 traverse the membrane as a helical segment; it reads TAVVIILTIAGNILVIM. Residues 98–111 lie on the Cytoplasmic side of the membrane; sequence AVSLEKKLQNATNY. The chain crosses the membrane as a helical span at residues 112-137; it reads FLMSLAIADMLLGFLVMPVSMLTILY. Topologically, residues 138–146 are extracellular; it reads GYRWPLPSK. The chain crosses the membrane as a helical span at residues 147 to 171; sequence LCAVWIYLDVLFSTASIMHLCAISL. Cys148 and Cys227 are disulfide-bonded. Asp155 contacts serotonin. Positions 172–174 match the DRY motif; important for ligand-induced conformation changes motif; sequence DRY. Residues 172–191 are Cytoplasmic-facing; that stretch reads DRYVAIQNPIHHSRFNSRTK. Residues 192-215 traverse the membrane as a helical segment; sequence AFLKIIAVWTISVGISMPIPVFGL. Residues 216–232 lie on the Extracellular side of the membrane; that stretch reads QDDSKVFKEGSCLLADD. A helical transmembrane segment spans residues 233–258; that stretch reads NFVLIGSFVSFFIPLTIMVITYFLTI. At 259–321 the chain is on the cytoplasmic side; that stretch reads KSLQKEATLC…QSISNEQKAC (63 aa). The residue at position 280 (Ser280) is a Phosphoserine. Residues 322–347 traverse the membrane as a helical segment; the sequence is KVLGIVFFLFVVMWCPFFITNIMAVI. Serotonin is bound at residue Asn342. Cys348 and Cys352 are disulfide-bonded. The Extracellular portion of the chain corresponds to 348 to 355; the sequence is CKESCNED. A helical transmembrane segment spans residues 356–381; the sequence is IIGALLNVFVWIGYLSSAVNPLVYTL. Residues 375 to 379 carry the NPxxY motif; important for ligand-induced conformation changes and signaling motif; it reads NPLVY. The Cytoplasmic segment spans residues 382 to 470; it reads FNKTYRSAFS…NTVNEKVSCV (89 aa). Residues 468 to 470 carry the PDZ-binding motif; sequence SCV.

Belongs to the G-protein coupled receptor 1 family. Interacts (via C-terminus) with MPDZ and PATJ. May interact (via C-terminus) with MPP3, PRDX6, DLG4, DLG1, CASK, APBA1 and MAGI2. Interacts with GRM2 and DRD2; this may affect signaling. In terms of tissue distribution, ubiquitous.

The protein resides in the cell membrane. It localises to the cell projection. It is found in the dendrite. Its subcellular location is the axon. The protein localises to the cytoplasmic vesicle. The protein resides in the membrane. It localises to the caveola. It is found in the presynapse. Its activity is regulated as follows. G-protein coupled receptor activity is regulated by lipids: oleamide increases HTR2A-mediated activity. Functionally, G-protein coupled receptor for 5-hydroxytryptamine (serotonin). Also functions as a receptor for various drugs and psychoactive substances, including mescaline, psilocybin, 1-(2,5-dimethoxy-4-iodophenyl)-2-aminopropane (DOI) and lysergic acid diethylamide (LSD). Ligand binding causes a conformation change that triggers signaling via guanine nucleotide-binding proteins (G proteins) and modulates the activity of downstream effectors. HTR2A is coupled to G(q)/G(11) G alpha proteins and activates phospholipase C-beta, releasing diacylglycerol (DAG) and inositol 1,4,5-trisphosphate (IP3) second messengers that modulate the activity of phosphatidylinositol 3-kinase and promote the release of Ca(2+) ions from intracellular stores, respectively. Beta-arrestin family members inhibit signaling via G proteins and mediate activation of alternative signaling pathways. Affects neural activity, perception, cognition and mood. Plays a role in the regulation of behavior, including responses to anxiogenic situations and psychoactive substances. Plays a role in intestinal smooth muscle contraction, and may play a role in arterial vasoconstriction. In Canis lupus familiaris (Dog), this protein is 5-hydroxytryptamine receptor 2A (HTR2A).